Reading from the N-terminus, the 703-residue chain is Centrosomal protein of 63 kDa (703 aa).

N-acetylmethionine is present on methionine 1. 4 coiled-coil regions span residues 22 to 199 (EAEL…ESVE), 242 to 306 (MTVL…QHAV), 353 to 533 (LEGS…STQM), and 676 to 703 (HILE…TALK). At serine 278 the chain carries Phosphoserine.

Belongs to the CEP63 family. Interacts with CEP152 and CDK1; these interactions recruit both ligands to centrosomes. Interacts with CDK2, CDK5RAP2, WDR62, CEP90, KIAA0753/moonraker and CCDC14. CEP63, CDK5RAP2, CEP152, WDR62 are proposed to form a stepwise assembled complex at the centrosome forming a ring near parental centrioles. Interacts with CCDC57; the interaction is required for their location to proximal end of centrioles. Interacts with FXR1; promoting its stabilization. In terms of assembly, (Microbial infection) Interacts with zika virus serine protease NS3; this interaction disorganizes the centrosome. Post-translationally, polyubiquitinated via 'Lys-48'-linked ubiquitin, leading to its degradation. Deubiquitinated by USP36, promoting its stabilization.

The protein resides in the cytoplasm. The protein localises to the cytoskeleton. Its subcellular location is the microtubule organizing center. It localises to the centrosome. It is found in the centriole. The protein resides in the centriolar satellite. Required for normal spindle assembly. Plays a key role in mother-centriole-dependent centriole duplication; the function seems also to involve CEP152, CDK5RAP2 and WDR62 through a stepwise assembled complex at the centrosome that recruits CDK2 required for centriole duplication. Reported to be required for centrosomal recruitment of CEP152; however, this function has been questioned. Also recruits CDK1 to centrosomes. Plays a role in DNA damage response. Following DNA damage, such as double-strand breaks (DSBs), is removed from centrosomes; this leads to the inactivation of spindle assembly and delay in mitotic progression. Promotes stabilization of FXR1 protein by inhibiting FXR1 ubiquitination. The sequence is that of Centrosomal protein of 63 kDa from Homo sapiens (Human).